A 166-amino-acid polypeptide reads, in one-letter code: Minor capsid protein VP2 (166 aa).

The tract at residues 138-166 (PAPSGFVNPNYQPSPPRLKLGPRPPSTNV) is disordered. Positions 149–166 (QPSPPRLKLGPRPPSTNV) are enriched in pro residues.

It belongs to the vesivirus VP2 protein family. In terms of assembly, homooligomer. The portal-like structure consists in 12 copies of VP2. Interacts with capsid protein VP1.

The protein localises to the virion. The protein resides in the host cytoplasm. In terms of biological role, minor structural protein that forms a portal-like structure at a unique three-fold axis of symmetry, following binding to the host receptor. The channel formed by VP2 may allow the delivery of the viral genome through the host endosomal membrane. The polypeptide is Minor capsid protein VP2 (Homo sapiens (Human)).